The sequence spans 648 residues: Mitotic interactor and substrate of PLK1 (648 aa).

Serine 77 is modified (phosphoserine; by CDK1). Residues threonine 149 and threonine 190 each carry the phosphothreonine modification. Serine 220 carries the phosphoserine modification. Disordered stretches follow at residues 242–383 and 430–460; these read VNDP…PEAR and KATE…GKAT. Serine 253 is modified (phosphoserine; by CDK1). A compositionally biased stretch (basic and acidic residues) spans 255–281; the sequence is ETPKETPIEREIRLAQEREAELREQRG. Residue threonine 256 is modified to Phosphothreonine; by CDK1. The residue at position 318 (serine 318) is a Phosphoserine. A compositionally biased stretch (basic and acidic residues) spans 325–339; sequence MVQETQREEDHRREG. Threonine 347 carries the post-translational modification Phosphothreonine; by CDK1. The segment covering 349-367 has biased composition (polar residues); it reads DWPSQDPQPGLQRSLSSDC. A phosphoserine mark is found at serine 352 and serine 364. 2 positions are modified to phosphoserine; by PLK1: serine 365 and serine 439. Residues 440-450 are compositionally biased toward polar residues; that stretch reads ESSGRSLSSKQ. 2 positions are modified to phosphoserine: serine 507 and serine 509. A coiled-coil region spans residues 511–534; the sequence is DLLEREMESVLRREREVAEERRNA. The disordered stretch occupies residues 539-568; sequence VFSPVPAEDESHEQDSRSSSRASGITGSYS. Phosphoserine; by CDK1 is present on serine 541. Serine 554 is modified (phosphoserine; by PLK1). The span at 557-568 shows a compositional bias: polar residues; that stretch reads SSRASGITGSYS. Serine 644 carries the phosphoserine modification.

It belongs to the MISP family. As to quaternary structure, associates with F-actin. Interacts with DCTN1; this interaction regulates DCTN1 distribution at the cell cortex. Interacts with PTK2/FAK and MAPRE1. In terms of processing, phosphorylated by CDK1 and PLK1. CDK1 is the priming kinase for PLK1 phosphorylation. Phosphorylation by PLK1 is required for proper spindle orientation at metaphase.

The protein localises to the cell junction. It is found in the focal adhesion. It localises to the cytoplasm. The protein resides in the cytoskeleton. Its subcellular location is the cell cortex. Plays a role in mitotic spindle orientation and mitotic progression. Regulates the distribution of dynactin at the cell cortex in a PLK1-dependent manner, thus stabilizing cortical and astral microtubule attachments required for proper mitotic spindle positioning. May link microtubules to the actin cytoskeleton and focal adhesions. May be required for directed cell migration and centrosome orientation. May also be necessary for proper stacking of the Golgi apparatus. The protein is Mitotic interactor and substrate of PLK1 of Mus musculus (Mouse).